The chain runs to 577 residues: Acyl-coenzyme A synthetase ACSM2A, mitochondrial (577 aa).

The transit peptide at 1 to 46 (MHWLRKVQGLCTLWGTQMSSRTLYINSRQLVSLQWGHQEVPAKFNF) directs the protein to the mitochondrion. Gln139 serves as a coordination point for CoA. ATP-binding positions include 221–229 (TSGTSGLPK), 359–364 (ESYGQT), Asp446, and Arg461. A substrate-binding site is contributed by Thr364. 469–471 (SGY) serves as a coordination point for CoA. Arg472 is a substrate binding site. Arg501 is a binding site for CoA. Residue Ser513 is modified to Phosphoserine. CoA-binding positions include Lys532 and 540–542 (YPR). ATP is bound at residue Lys557.

It belongs to the ATP-dependent AMP-binding enzyme family. As to quaternary structure, monomer. Mg(2+) serves as cofactor. Mn(2+) is required as a cofactor.

Its subcellular location is the mitochondrion. It carries out the reaction a medium-chain fatty acid + ATP + CoA = a medium-chain fatty acyl-CoA + AMP + diphosphate. It catalyses the reaction benzoate + ATP + CoA = benzoyl-CoA + AMP + diphosphate. The catalysed reaction is hexanoate + ATP + CoA = hexanoyl-CoA + AMP + diphosphate. The enzyme catalyses butanoate + ATP + CoA = butanoyl-CoA + AMP + diphosphate. It carries out the reaction octanoate + ATP + CoA = octanoyl-CoA + AMP + diphosphate. It catalyses the reaction decanoate + ATP + CoA = decanoyl-CoA + AMP + diphosphate. In terms of biological role, catalyzes the activation of fatty acids by CoA to produce an acyl-CoA, the first step in fatty acid metabolism. Capable of activating medium-chain fatty acids (e.g. butyric (C4) to decanoic (C10) acids), and certain carboxylate-containing xenobiotics, e.g. benzoate. The polypeptide is Acyl-coenzyme A synthetase ACSM2A, mitochondrial (ACSM2A) (Homo sapiens (Human)).